A 193-amino-acid chain; its full sequence is Putative manganese efflux pump MntP (193 aa).

6 helical membrane passes run 3 to 23 (MYAT…ASIC), 41 to 61 (LIFG…GLYA), 65 to 85 (IIEW…CRMI), 106 to 126 (IVLI…GIGL), 133 to 153 (IVHT…LGML), and 169 to 189 (IGGL…LELF).

Belongs to the MntP (TC 9.B.29) family.

It localises to the cell inner membrane. Functionally, probably functions as a manganese efflux pump. The sequence is that of Putative manganese efflux pump MntP from Photorhabdus laumondii subsp. laumondii (strain DSM 15139 / CIP 105565 / TT01) (Photorhabdus luminescens subsp. laumondii).